The following is a 168-amino-acid chain: Xanthine-guanine phosphoribosyltransferase (168 aa).

Residues 46–47 (RG) and 101–109 (DDLVDSGVT) each bind 5-phospho-alpha-D-ribose 1-diphosphate. Aspartate 102 is a Mg(2+) binding site. A guanine-binding site is contributed by aspartate 105. 2 residues coordinate xanthine: aspartate 105 and valine 148. GMP is bound by residues 105-109 (DSGVT) and 147-148 (WV).

Belongs to the purine/pyrimidine phosphoribosyltransferase family. XGPT subfamily. As to quaternary structure, homotetramer. Requires Mg(2+) as cofactor.

It is found in the cell inner membrane. It catalyses the reaction GMP + diphosphate = guanine + 5-phospho-alpha-D-ribose 1-diphosphate. The catalysed reaction is XMP + diphosphate = xanthine + 5-phospho-alpha-D-ribose 1-diphosphate. It carries out the reaction IMP + diphosphate = hypoxanthine + 5-phospho-alpha-D-ribose 1-diphosphate. Its pathway is purine metabolism; GMP biosynthesis via salvage pathway; GMP from guanine: step 1/1. It functions in the pathway purine metabolism; XMP biosynthesis via salvage pathway; XMP from xanthine: step 1/1. Its function is as follows. Purine salvage pathway enzyme that catalyzes the transfer of the ribosyl-5-phosphate group from 5-phospho-alpha-D-ribose 1-diphosphate (PRPP) to the N9 position of the 6-oxopurines guanine and xanthine to form the corresponding ribonucleotides GMP (guanosine 5'-monophosphate) and XMP (xanthosine 5'-monophosphate), with the release of PPi. To a lesser extent, also acts on hypoxanthine. This chain is Xanthine-guanine phosphoribosyltransferase, found in Gluconobacter oxydans (strain 621H) (Gluconobacter suboxydans).